Consider the following 363-residue polypeptide: Pyrimidine monooxygenase RutA (363 aa).

Residues isoleucine 49–lysine 50, asparagine 115, glutamate 124, arginine 140–tyrosine 141, and serine 190 contribute to the FMN site.

The protein belongs to the NtaA/SnaA/DszA monooxygenase family. RutA subfamily.

It carries out the reaction uracil + FMNH2 + NADH + O2 = (Z)-3-ureidoacrylate + FMN + NAD(+) + H2O + H(+). The enzyme catalyses thymine + FMNH2 + NADH + O2 = (Z)-2-methylureidoacrylate + FMN + NAD(+) + H2O + H(+). Functionally, catalyzes the pyrimidine ring opening between N-3 and C-4 by an unusual flavin hydroperoxide-catalyzed mechanism, adding oxygen atoms in the process to yield ureidoacrylate peracid, that immediately reacts with FMN forming ureidoacrylate and FMN-N(5)-oxide. The FMN-N(5)-oxide reacts spontaneously with NADH to produce FMN. Requires the flavin reductase RutF to regenerate FMN in vivo. The chain is Pyrimidine monooxygenase RutA from Rhizobium rhizogenes (strain K84 / ATCC BAA-868) (Agrobacterium radiobacter).